Consider the following 563-residue polypeptide: MAKATAKNSAKQPKYIFITGGVVSSLGKGITSASLALLLKSRGYKVFMQKLDPYLNVDPGTMSPYQHGEVFVTDDGYETDLDLGHYERFAGVQCSKASSYTSGRIYSSVLSKERAGHYLGGTVQVIPHITNEIKDAFRSAAESGADIILCEIGGVAGDIESLPFLEAARQFRFEVGVENTCFIHLTLVPYLKAAGELKTKPSQHSVAELRNIGIFPDILVCRTEMHIPQEHLDKLALFCNVKPECVIEEKDVKDSVYAVPRELSKQELDLRVLEQLHLSVHPIVHSEWDSLVKKATQPKYECTIALVGKYIAIRDAYKSVHEALQHAGMANNAKVNVECIEAEELEKNPKLIKKADGILIPGGFGSRGVNGKCAAIRYARENKVPLLGICLGMQCCVIEFARDVLGWKDANSTEFDENTTHPVIDLMDEQKNVTEKGGTMRLGAYPCKLAKDSNAAKLYKSEKISERHRHRYEFNYNSEFRKELEKAGLKIAGTSPDGKLVEMVELKNHPYFEACQFHPEFKSRPTDPHPLFTGLVKAALEQKKANGKKPTAPSEKTKKTKTK.

Positions 1-278 (MAKATAKNSA…DLRVLEQLHL (278 aa)) are amidoligase domain. Position 24 (S24) interacts with CTP. S24 contributes to the UTP binding site. Position 25-30 (25-30 (SLGKGI)) interacts with ATP. Position 65 (Y65) interacts with L-glutamine. D82 contacts ATP. Mg(2+)-binding residues include D82 and E151. CTP contacts are provided by residues 158-160 (DIE), 198-203 (KTKPSQ), and K234. UTP-binding positions include 198–203 (KTKPSQ) and K234. Position 250-252 (250-252 (KDV)) interacts with ATP. The 243-residue stretch at 303 to 545 (TIALVGKYIA…VKAALEQKKA (243 aa)) folds into the Glutamine amidotransferase type-1 domain. G363 lines the L-glutamine pocket. Residue C390 is the Nucleophile; for glutamine hydrolysis of the active site. L-glutamine is bound by residues 391–394 (LGMQ), E414, and R471. Catalysis depends on residues H518 and E520. Residues 542-563 (QKKANGKKPTAPSEKTKKTKTK) are disordered.

This sequence belongs to the CTP synthase family. As to quaternary structure, homotetramer.

The enzyme catalyses UTP + L-glutamine + ATP + H2O = CTP + L-glutamate + ADP + phosphate + 2 H(+). The catalysed reaction is L-glutamine + H2O = L-glutamate + NH4(+). It catalyses the reaction UTP + NH4(+) + ATP = CTP + ADP + phosphate + 2 H(+). It functions in the pathway pyrimidine metabolism; CTP biosynthesis via de novo pathway; CTP from UDP: step 2/2. With respect to regulation, allosterically activated by GTP, when glutamine is the substrate; GTP has no effect on the reaction when ammonia is the substrate. The allosteric effector GTP functions by stabilizing the protein conformation that binds the tetrahedral intermediate(s) formed during glutamine hydrolysis. Inhibited by the product CTP, via allosteric rather than competitive inhibition. Its function is as follows. Catalyzes the ATP-dependent amination of UTP to CTP with either L-glutamine or ammonia as the source of nitrogen. Regulates intracellular CTP levels through interactions with the four ribonucleotide triphosphates. The chain is CTP synthase from Fibrobacter succinogenes (strain ATCC 19169 / S85).